The following is a 144-amino-acid chain: Large ribosomal subunit protein uL15 (144 aa).

Residues 1-48 (MQLNNLKPAAGSKHAKRRVGRGIGSGLGKTAGRGHKGQKSRSGGFHKV) are disordered. Residues 21-31 (RGIGSGLGKTA) are compositionally biased toward gly residues.

This sequence belongs to the universal ribosomal protein uL15 family. As to quaternary structure, part of the 50S ribosomal subunit.

Its function is as follows. Binds to the 23S rRNA. This is Large ribosomal subunit protein uL15 from Cupriavidus pinatubonensis (strain JMP 134 / LMG 1197) (Cupriavidus necator (strain JMP 134)).